A 568-amino-acid polypeptide reads, in one-letter code: Sulfite reductase [NADPH] hemoprotein beta-component (568 aa).

4 residues coordinate [4Fe-4S] cluster: cysteine 425, cysteine 431, cysteine 470, and cysteine 474. Cysteine 474 lines the siroheme pocket.

Belongs to the nitrite and sulfite reductase 4Fe-4S domain family. In terms of assembly, alpha(8)-beta(8). The alpha component is a flavoprotein, the beta component is a hemoprotein. Requires siroheme as cofactor. [4Fe-4S] cluster is required as a cofactor.

The catalysed reaction is hydrogen sulfide + 3 NADP(+) + 3 H2O = sulfite + 3 NADPH + 4 H(+). Its pathway is sulfur metabolism; hydrogen sulfide biosynthesis; hydrogen sulfide from sulfite (NADPH route): step 1/1. Component of the sulfite reductase complex that catalyzes the 6-electron reduction of sulfite to sulfide. This is one of several activities required for the biosynthesis of L-cysteine from sulfate. In Xanthomonas euvesicatoria pv. vesicatoria (strain 85-10) (Xanthomonas campestris pv. vesicatoria), this protein is Sulfite reductase [NADPH] hemoprotein beta-component.